Reading from the N-terminus, the 575-residue chain is Developmental and secondary metabolism regulator VEL1 (575 aa).

One can recognise a Velvet domain in the interval 21–225; that stretch reads GRKLKYTLTV…AEQGCRVRIR (205 aa). A Nuclear localization signal motif is present at residues 35-40; the sequence is ERARAC. Disordered regions lie at residues 36-56 and 227-402; these read RARA…VDPP and DVRM…QSYE. The span at 274–284 shows a compositional bias: basic and acidic residues; it reads VHEDPQQRRGS. Polar residues predominate over residues 294–308; that stretch reads VVNTPFRTPSISPST. Residues 334–346 show a composition bias toward pro residues; that stretch reads IQPPHPPPPPPSS. Composition is skewed to polar residues over residues 355–365 and 385–402; these read HHNQGPSTQFR and SYSQ…QSYE. The interval 465–509 is PEST; it reads AEQPLAMSPLASVTSISRGTQNSAPMPSHNYNKLERSGSYSQYAP. Positions 513 to 549 are disordered; it reads EAPKSTNKRSFNDVFSTPTESLSNGRRPSAIGIDIEE. The span at 516–538 shows a compositional bias: polar residues; sequence KSTNKRSFNDVFSTPTESLSNGR.

This sequence belongs to the velvet family. VeA subfamily. Component of the heterotrimeric velvet complex composed of LAE1, VEL1 and VEL2; VEL1 acting as a bridging protein between LAE1 and VEL2.

It localises to the nucleus. It is found in the cytoplasm. Component of the velvet transcription factor complex that controls sexual/asexual developmental ratio in response to light, promoting sexual development in the darkness while stimulating asexual sporulation under illumination. The velvet complex hat acts as a global regulator for secondary metabolite gene expression. Controls the expression of the oxalic acid and melanin gene clusters. Also controls the expression of proteases and carbohydrate-active enzymes. Involved in the resistance to oxidative stress. Required for full virulence. This is Developmental and secondary metabolism regulator VEL1 from Botryotinia fuckeliana (strain B05.10) (Noble rot fungus).